The following is a 227-amino-acid chain: 7-cyano-7-deazaguanine synthase (227 aa).

ATP is bound at residue 9 to 19 (LSGGLDSATVL). Residues cysteine 189, cysteine 199, cysteine 202, and cysteine 205 each coordinate Zn(2+).

The protein belongs to the QueC family. Zn(2+) serves as cofactor.

The catalysed reaction is 7-carboxy-7-deazaguanine + NH4(+) + ATP = 7-cyano-7-deazaguanine + ADP + phosphate + H2O + H(+). It functions in the pathway purine metabolism; 7-cyano-7-deazaguanine biosynthesis. Its function is as follows. Catalyzes the ATP-dependent conversion of 7-carboxy-7-deazaguanine (CDG) to 7-cyano-7-deazaguanine (preQ(0)). This is 7-cyano-7-deazaguanine synthase from Cupriavidus necator (strain ATCC 17699 / DSM 428 / KCTC 22496 / NCIMB 10442 / H16 / Stanier 337) (Ralstonia eutropha).